We begin with the raw amino-acid sequence, 297 residues long: Octopine catabolism/uptake operon regulatory protein OccR (297 aa).

Residues 1-58 enclose the HTH lysR-type domain; it reads MNLRQVEAFRAVMLTGQMTAAAELMLVTQPAISRLIKDFERATKLQLFERRGNHIIPT. A DNA-binding region (H-T-H motif) is located at residues 18–37; the sequence is MTAAAELMLVTQPAISRLIK.

Belongs to the LysR transcriptional regulatory family.

Functionally, positive regulatory protein for the occ operon involved in octopine catabolism and uptake. Also acts as a negative regulator of its expression. The sequence is that of Octopine catabolism/uptake operon regulatory protein OccR (occR) from Rhizobium meliloti (Ensifer meliloti).